We begin with the raw amino-acid sequence, 156 residues long: Small ribosomal subunit protein uS7 (156 aa).

It belongs to the universal ribosomal protein uS7 family. Part of the 30S ribosomal subunit. Contacts proteins S9 and S11.

One of the primary rRNA binding proteins, it binds directly to 16S rRNA where it nucleates assembly of the head domain of the 30S subunit. Is located at the subunit interface close to the decoding center, probably blocks exit of the E-site tRNA. In Gemmatimonas aurantiaca (strain DSM 14586 / JCM 11422 / NBRC 100505 / T-27), this protein is Small ribosomal subunit protein uS7.